Consider the following 92-residue polypeptide: PqqA binding protein (92 aa).

This sequence belongs to the PqqD family. Monomer. Interacts with PqqE.

Its pathway is cofactor biosynthesis; pyrroloquinoline quinone biosynthesis. Functions as a PqqA binding protein and presents PqqA to PqqE, in the pyrroloquinoline quinone (PQQ) biosynthetic pathway. This is PqqA binding protein from Xanthomonas campestris pv. campestris (strain 8004).